The following is a 438-amino-acid chain: sn-glycerol-3-phosphate-binding periplasmic protein UgpB (438 aa).

Residues methionine 1–alanine 23 form the signal peptide. The sn-glycerol 3-phosphate site is built by tyrosine 65, glutamate 89, serine 144, serine 270, glycine 307, tyrosine 346, and arginine 397.

Belongs to the bacterial solute-binding protein 1 family. The complex is composed of two ATP-binding proteins (UgpC), two transmembrane proteins (UgpA and UgpE) and a solute-binding protein (UgpB).

The protein localises to the periplasm. Functionally, part of the ABC transporter complex UgpBAEC involved in sn-glycerol-3-phosphate (G3P) import. Binds G3P. This chain is sn-glycerol-3-phosphate-binding periplasmic protein UgpB (ugpB), found in Salmonella typhi.